The following is a 258-amino-acid chain: 5-oxoprolinase subunit A 2 (258 aa).

Belongs to the LamB/PxpA family. As to quaternary structure, forms a complex composed of PxpA, PxpB and PxpC.

It carries out the reaction 5-oxo-L-proline + ATP + 2 H2O = L-glutamate + ADP + phosphate + H(+). Catalyzes the cleavage of 5-oxoproline to form L-glutamate coupled to the hydrolysis of ATP to ADP and inorganic phosphate. The sequence is that of 5-oxoprolinase subunit A 2 from Pseudomonas putida (strain ATCC 47054 / DSM 6125 / CFBP 8728 / NCIMB 11950 / KT2440).